We begin with the raw amino-acid sequence, 140 residues long: Ribosome-binding factor A (140 aa).

The disordered stretch occupies residues 121 to 140; the sequence is KAAEHGREDEELDDTEQDDK. Acidic residues predominate over residues 129–140; the sequence is DEELDDTEQDDK.

It belongs to the RbfA family. As to quaternary structure, monomer. Binds 30S ribosomal subunits, but not 50S ribosomal subunits or 70S ribosomes.

Its subcellular location is the cytoplasm. One of several proteins that assist in the late maturation steps of the functional core of the 30S ribosomal subunit. Associates with free 30S ribosomal subunits (but not with 30S subunits that are part of 70S ribosomes or polysomes). Required for efficient processing of 16S rRNA. May interact with the 5'-terminal helix region of 16S rRNA. This is Ribosome-binding factor A from Shewanella loihica (strain ATCC BAA-1088 / PV-4).